The following is a 220-amino-acid chain: UPF0319 protein YccT (220 aa).

An N-terminal signal peptide occupies residues 1–20 (MKTGALTTFLALCLPVTVFA).

The protein belongs to the UPF0319 family.

In Salmonella schwarzengrund (strain CVM19633), this protein is UPF0319 protein YccT.